Reading from the N-terminus, the 640-residue chain is Biosynthetic arginine decarboxylase (640 aa).

Residue Lys105 is modified to N6-(pyridoxal phosphate)lysine. 290–300 (FDVGGGLAVDY) is a substrate binding site.

It belongs to the Orn/Lys/Arg decarboxylase class-II family. SpeA subfamily. Requires Mg(2+) as cofactor. It depends on pyridoxal 5'-phosphate as a cofactor.

The catalysed reaction is L-arginine + H(+) = agmatine + CO2. Catalyzes the biosynthesis of agmatine from arginine. The protein is Biosynthetic arginine decarboxylase of Vibrio cholerae serotype O1 (strain ATCC 39315 / El Tor Inaba N16961).